The following is a 113-amino-acid chain: uncharacterized protein (113 aa).

The protein resides in the mitochondrion. This is an uncharacterized protein from Arabidopsis thaliana (Mouse-ear cress).